The following is a 299-amino-acid chain: GTPase Era (299 aa).

The Era-type G domain maps to Arg-9–Glu-177. The G1 stretch occupies residues Gly-17 to Ser-24. Gly-17–Ser-24 contacts GTP. Residues Gln-43–His-47 form a G2 region. Positions Asp-64 to Gly-67 are G3. Residues Asp-64–Leu-68 and Asn-126–Asp-129 contribute to the GTP site. Residues Asn-126–Asp-129 are G4. A G5 region spans residues Val-156 to Ala-158. The 85-residue stretch at Val-200–Glu-284 folds into the KH type-2 domain.

Belongs to the TRAFAC class TrmE-Era-EngA-EngB-Septin-like GTPase superfamily. Era GTPase family. In terms of assembly, monomer.

It is found in the cytoplasm. The protein resides in the cell inner membrane. An essential GTPase that binds both GDP and GTP, with rapid nucleotide exchange. Plays a role in 16S rRNA processing and 30S ribosomal subunit biogenesis and possibly also in cell cycle regulation and energy metabolism. The polypeptide is GTPase Era (Xanthomonas oryzae pv. oryzae (strain MAFF 311018)).